Here is a 231-residue protein sequence, read N- to C-terminus: High-affinity zinc uptake system ATP-binding protein ZnuC (231 aa).

Positions 4-230 (VSLKDIVFGY…CLTWNSCDEL (227 aa)) constitute an ABC transporter domain.

This sequence belongs to the ABC transporter superfamily. In terms of assembly, the complex is composed of two ATP-binding proteins (ZnuC), two transmembrane proteins (ZnuB) and a solute-binding protein (ZnuA).

The protein resides in the cell membrane. The enzyme catalyses Zn(2+)(out) + ATP(in) + H2O(in) = Zn(2+)(in) + ADP(in) + phosphate(in) + H(+)(in). Part of the high-affinity ABC transporter complex ZnuABC involved in zinc import. Responsible for energy coupling to the transport system. ZnuABC-mediated zinc transport is required for comF expression and competence development. The chain is High-affinity zinc uptake system ATP-binding protein ZnuC (znuC) from Bacillus subtilis (strain 168).